The sequence spans 606 residues: MLLSQTRGRLPSTLRSFSRRALSTTLPRGKDSEETALNKVSRNVTQPISQGASQAMLYATGLTEEDMNKAQVGISSVWYNGNPCNMHLLDLSNRVREGVQKAGLVGFQFNTVGVSDAISMGTKGMRYSLQSRDLIADSIETVMGGQWYDANISIPGCDKNMPGVLMAMGRVNRPSLMVYGGTIKPGCARTQNNADIDIVSAFQAYGQFLTGEITENQRFDIIRNACPGGGACGGMYTANTMATAIEVMGMTLPGSSSNPAESKAKDLECLAAGEAIKRLLKEDIRPSDILTRQAFENAMIVVNITGGSTNAVLHLIAIADSVGIKLDIEDFQKVSDRTPFLADLKPSGKYVMADLHNIGGTPSLLKFLLKEGVIDGSGMTVTGETLAKNLEKVPDFPADQKIIRPLSNPIKKTGHIQILRGSLAPGGSVGKITGKEGTRFVGKARVFDDEDDFIAALERNEIKKEEKTVVVIRYTGPKGGPGMPEMLKPSSALMGAGLGSSCALITDGRFSGGSHGFLIGHIVPEAAVGGPIGLVKDGDTITIDAEKRLLDLDVDETELARRRKEWEALRDAGKLPQTGLTMRGTLGKYARTVKDASHGCITDSVE.

Residue C84 participates in [2Fe-2S] cluster binding. D116 provides a ligand contact to Mg(2+). C157 serves as a coordination point for [2Fe-2S] cluster. Mg(2+) is bound at residue D158. C232 provides a ligand contact to [2Fe-2S] cluster. Residue E485 coordinates Mg(2+). Catalysis depends on S511, which acts as the Proton acceptor.

Belongs to the IlvD/Edd family. Requires [2Fe-2S] cluster as cofactor. Mg(2+) serves as cofactor.

It is found in the mitochondrion. The enzyme catalyses (2R)-2,3-dihydroxy-3-methylbutanoate = 3-methyl-2-oxobutanoate + H2O. It carries out the reaction (2R,3R)-2,3-dihydroxy-3-methylpentanoate = (S)-3-methyl-2-oxopentanoate + H2O. Its pathway is amino-acid biosynthesis; L-isoleucine biosynthesis; L-isoleucine from 2-oxobutanoate: step 3/4. It participates in amino-acid biosynthesis; L-valine biosynthesis; L-valine from pyruvate: step 3/4. DHAD activity is inhibited in dose-dependent manner by 2-hydroxy-3-methylbutyric acid with an IC(50) of about 8 mM. Dihydroxyacid dehydratase that catalyzes the third step in the common pathway leading to biosynthesis of branched-chain amino acids. Catalyzes the dehydration of (2R,3R)-2,3-dihydroxy-3-methylpentanoate (2,3-dihydroxy-3-methylvalerate) into 2-oxo-3-methylpentanoate (2-oxo-3-methylvalerate) and of (2R)-2,3-dihydroxy-3-methylbutanoate (2,3-dihydroxyisovalerate) into 2-oxo-3-methylbutanoate (2-oxoisovalerate), the penultimate precursor to L-isoleucine and L-valine, respectively. IlvC and the branched-chain amino acid biosynthesis are crucial for virulence and may be a potential target to develop antifungal agents. This chain is Dihydroxy-acid dehydratase ilvC, mitochondrial, found in Aspergillus fumigatus (strain ATCC MYA-4609 / CBS 101355 / FGSC A1100 / Af293) (Neosartorya fumigata).